Here is a 214-residue protein sequence, read N- to C-terminus: Large ribosomal subunit protein uL4 (214 aa).

Residues 43-83 (RRQAGTHKAKSRSEVNRTTKKSIKQKGSGGARHGSRNAPIF) are disordered.

It belongs to the universal ribosomal protein uL4 family. As to quaternary structure, part of the 50S ribosomal subunit.

In terms of biological role, one of the primary rRNA binding proteins, this protein initially binds near the 5'-end of the 23S rRNA. It is important during the early stages of 50S assembly. It makes multiple contacts with different domains of the 23S rRNA in the assembled 50S subunit and ribosome. Forms part of the polypeptide exit tunnel. This is Large ribosomal subunit protein uL4 from Hyphomonas neptunium (strain ATCC 15444).